Here is a 615-residue protein sequence, read N- to C-terminus: Chaperone protein HscA (615 aa).

This sequence belongs to the heat shock protein 70 family.

In terms of biological role, chaperone involved in the maturation of iron-sulfur cluster-containing proteins. Has a low intrinsic ATPase activity which is markedly stimulated by HscB. Involved in the maturation of IscU. This Xenorhabdus nematophila (strain ATCC 19061 / DSM 3370 / CCUG 14189 / LMG 1036 / NCIMB 9965 / AN6) protein is Chaperone protein HscA.